Reading from the N-terminus, the 665-residue chain is RNA polymerase II-associated protein 3 (665 aa).

Thr2 carries the post-translational modification N-acetylthreonine. The stretch at 8–41 is one TPR 1 repeat; sequence IELQLQVKQNAEELQDFMRDLENWEKDIKQKDME. The tract at residues 37–82 is disordered; sequence QKDMELRRQNGVPEENLPPIRNGNFRKKKKGKAKESSKKTREENTK. The span at 69 to 82 shows a compositional bias: basic and acidic residues; that stretch reads AKESSKKTREENTK. Phosphoserine occurs at positions 87, 116, 119, and 121. Residues 109–129 are disordered; it reads DSTHESLSQESESEEDGIHVD. TPR repeat units lie at residues 133–166, 168–200, 201–234, 282–315, 317–349, and 350–383; these read ALVLKEKGNKYFKQGKYDEAIDCYTKGMDADPYN, VLPTNRASAYFRLKKFAVAESDCNLAVALNRSY, TKAYSRRGAARFALQKLEEAKKDYERVLELEPNN, AISEKDRGNGFFKEGKYERAIECYTRGIAADGAN, LLPANRAMAYLKIQKYEEAEKDCTQAILLDGSY, and SKAFARRGTARTFLGKLNEAKQDFETVLLLEPGN. Residue Ser481 is modified to Phosphoserine. A Glycyl lysine isopeptide (Lys-Gly) (interchain with G-Cter in SUMO2) cross-link involves residue Lys498.

Belongs to the RPAP3 family. In terms of assembly, tightly associated with the RNA polymerase II complex. Component of the R2TP complex composed at least of RUVBL1, RUVBL2, RPAP3 and PIHD1. Component of the PAQosome complex which is responsible for the biogenesis of several protein complexes and which consists of R2TP complex members RUVBL1, RUVBL2, RPAP3 and PIH1D1, URI complex members PFDN2, PFDN6, PDRG1, UXT and URI1 as well as ASDURF, POLR2E and DNAAF10/WDR92. Interacts with PIH1D1. Interacts with TSC1 and TSC2. Interacts with PRPF8 and EFTUD2 in a ZNHIT2-dependent manner.

Functionally, forms an interface between the RNA polymerase II enzyme and chaperone/scaffolding protein, suggesting that it is required to connect RNA polymerase II to regulators of protein complex formation. In Homo sapiens (Human), this protein is RNA polymerase II-associated protein 3 (RPAP3).